Reading from the N-terminus, the 381-residue chain is Cytochrome b (381 aa).

The next 4 helical transmembrane spans lie at 33–53 (FGSL…FLAM), 77–98 (WLIR…FLHV), 113–133 (WNIG…GYVL), and 178–198 (FFAF…VHLL). Heme b-binding residues include His-83 and His-97. Heme b contacts are provided by His-182 and His-196. A ubiquinone is bound at residue His-201. A run of 4 helical transmembrane segments spans residues 226–246 (IKDA…ALFS), 288–308 (LGGV…PLLH), 320–340 (VSQT…WIGG), and 347–367 (FIII…VLMP).

This sequence belongs to the cytochrome b family. The cytochrome bc1 complex contains 11 subunits: 3 respiratory subunits (MT-CYB, CYC1 and UQCRFS1), 2 core proteins (UQCRC1 and UQCRC2) and 6 low-molecular weight proteins (UQCRH/QCR6, UQCRB/QCR7, UQCRQ/QCR8, UQCR10/QCR9, UQCR11/QCR10 and a cleavage product of UQCRFS1). This cytochrome bc1 complex then forms a dimer. It depends on heme b as a cofactor.

It localises to the mitochondrion inner membrane. Component of the ubiquinol-cytochrome c reductase complex (complex III or cytochrome b-c1 complex) that is part of the mitochondrial respiratory chain. The b-c1 complex mediates electron transfer from ubiquinol to cytochrome c. Contributes to the generation of a proton gradient across the mitochondrial membrane that is then used for ATP synthesis. The chain is Cytochrome b (MT-CYB) from Ningaui yvonnae (Southern ningaui).